We begin with the raw amino-acid sequence, 203 residues long: Ribonuclease HII (203 aa).

Residues 15 to 201 enclose the RNase H type-2 domain; the sequence is LLVAGLDEAG…VAQAPLRFPE (187 aa). A divalent metal cation contacts are provided by Asp-21, Glu-22, and Asp-111.

This sequence belongs to the RNase HII family. It depends on Mn(2+) as a cofactor. Requires Mg(2+) as cofactor.

The protein localises to the cytoplasm. The enzyme catalyses Endonucleolytic cleavage to 5'-phosphomonoester.. Its function is as follows. Endonuclease that specifically degrades the RNA of RNA-DNA hybrids. The polypeptide is Ribonuclease HII (Thermus thermophilus (strain ATCC BAA-163 / DSM 7039 / HB27)).